We begin with the raw amino-acid sequence, 624 residues long: MFARGSRRRRSGRAPPEAEDPARGQPCNSCREQCPGFLLHGWRKICQHCKCPREEHAVRTVPVDLERIMCRLISDFQRHSISDDDSGCASEEYAWVPPGLKPEQVYQFFSCLPEDKVPYVNSPGEKYRIKQLLHQLPPHDSEAQYCTALEEEEKKELRAFSQQRKRENLGRATVRIFPVTITGAICEECGKQIGGGDIAVFASRAGLGACWHPQCFVCTTCQELLVDLIYFYHAGKVYCGRHHAECLRPRCQACDEIIFSPECTEAEGRHWHMGHFCCFECEASLGGQRYVMRQSRPHCCACYEARHAEYCDGCGEHIGLDQGQMAYEGQHWHASDRCFCCSRCSRPLLGRPFLPRRGLIFCSRACSLGSETTAPGPGRRSWSAGTVTTPLTTSTASFSATEGTSETASKGTCTKAEPAAGPEEPSHFLRGAPHRHSMPELGLRSAPEPPTESPGHPAPHPDDNAFGRQSTPRVSFRDPLVSEGGPRRTLSAPPAQRRRPRSPPPRTPSCHHHHHHRRRRQRHRRRGSHHHHHHPGRHGHHRCDLGSGSDSGSCSSSPSSPSSESSEDDGFFLGERIPLPPHLCRPRTTQDTSTETFNSPAQPLVQESHPVMPRQTRDKNCIVA.

Residues 1–12 (MFARGSRRRRSG) show a composition bias toward basic residues. A disordered region spans residues 1 to 26 (MFARGSRRRRSGRAPPEAEDPARGQP). Residues 74 to 182 (SDFQRHSISD…TVRIFPVTIT (109 aa)) form the PET domain. LIM zinc-binding domains lie at 184 to 249 (AICE…CLRP), 250 to 309 (RCQA…RHAE), and 310 to 373 (YCDG…SETT). Residues 371–617 (ETTAPGPGRR…SHPVMPRQTR (247 aa)) form a disordered region. Residues 383–409 (SAGTVTTPLTTSTASFSATEGTSETAS) show a composition bias toward low complexity. Positions 447–458 (PEPPTESPGHPA) are enriched in pro residues. Ser-475 and Ser-491 each carry phosphoserine. Residues 509-541 (SCHHHHHHRRRRQRHRRRGSHHHHHHPGRHGHH) show a composition bias toward basic residues. Positions 545-564 (LGSGSDSGSCSSSPSSPSSE) are enriched in low complexity. Positions 587 to 601 (RTTQDTSTETFNSPA) are enriched in polar residues.

It belongs to the prickle / espinas / testin family. As to quaternary structure, interacts with VANGL2 via its C-terminus. The VANGL2-dependent membrane recruitment of PRICKLE3 is a prerequisite for its polarization. Interacts with WTIP. WTIP is involved in the recruitment of PRICKLE3 to the basal body. Interacts with MT-ATP8, a component of the mitochondrial complex V. Widely expressed.

It is found in the cytoplasm. The protein localises to the cell membrane. The protein resides in the mitochondrion. In terms of biological role, involved in the planar cell polarity (PCP) pathway that is essential for the polarization of epithelial cells during morphogenetic processes, including gastrulation and neurulation. PCP is maintained by two molecular modules, the global and the core modules, PRICKLE3 being part of the core module. Distinct complexes of the core module segregate to opposite sides of the cell, where they interact with the opposite complex in the neighboring cell at or near the adherents junctions. Involved in the organization of the basal body. Involved in cilia growth and positioning. Required for proper assembly, stability, and function of mitochondrial membrane ATP synthase (mitochondrial complex V). This chain is Prickle planar cell polarity protein 3, found in Mus musculus (Mouse).